Here is a 66-residue protein sequence, read N- to C-terminus: Protein translocase subunit SecE (66 aa).

Residues 41–61 form a helical membrane-spanning segment; sequence LAVMFIVGFVGFVIYILMEIL.

This sequence belongs to the SecE/SEC61-gamma family. In terms of assembly, component of the Sec protein translocase complex. Heterotrimer consisting of SecY (alpha), SecG (beta) and SecE (gamma) subunits. The heterotrimers can form oligomers, although 1 heterotrimer is thought to be able to translocate proteins. Interacts with the ribosome. May interact with SecDF, and other proteins may be involved.

The protein localises to the cell membrane. Its function is as follows. Essential subunit of the Sec protein translocation channel SecYEG. Clamps together the 2 halves of SecY. May contact the channel plug during translocation. This Archaeoglobus fulgidus (strain ATCC 49558 / DSM 4304 / JCM 9628 / NBRC 100126 / VC-16) protein is Protein translocase subunit SecE.